The following is a 128-amino-acid chain: Glycine cleavage system H protein (128 aa).

The Lipoyl-binding domain maps to 22–104 (TVLVGITDYA…YGEGWIFRLK (83 aa)). Position 63 is an N6-lipoyllysine (K63).

Belongs to the GcvH family. As to quaternary structure, the glycine cleavage system is composed of four proteins: P, T, L and H. Requires (R)-lipoate as cofactor.

The glycine cleavage system catalyzes the degradation of glycine. The H protein shuttles the methylamine group of glycine from the P protein to the T protein. This Thermus thermophilus (strain ATCC BAA-163 / DSM 7039 / HB27) protein is Glycine cleavage system H protein.